Reading from the N-terminus, the 539-residue chain is Chaperonin GroEL 2 (539 aa).

Residues 29–32 (TLGP), 86–90 (DGTTT), glycine 413, 477–479 (NAA), and aspartate 493 contribute to the ATP site. The tract at residues 519–539 (VVDKPEEEDSAAAGHGHGHSH) is disordered.

Belongs to the chaperonin (HSP60) family. As to quaternary structure, forms a cylinder of 14 subunits composed of two heptameric rings stacked back-to-back. Interacts with the co-chaperonin GroES.

The protein resides in the cytoplasm. It catalyses the reaction ATP + H2O + a folded polypeptide = ADP + phosphate + an unfolded polypeptide.. Functionally, together with its co-chaperonin GroES, plays an essential role in assisting protein folding. The GroEL-GroES system forms a nano-cage that allows encapsulation of the non-native substrate proteins and provides a physical environment optimized to promote and accelerate protein folding. The protein is Chaperonin GroEL 2 of Saccharopolyspora erythraea (strain ATCC 11635 / DSM 40517 / JCM 4748 / NBRC 13426 / NCIMB 8594 / NRRL 2338).